The chain runs to 467 residues: tRNA-2-methylthio-N(6)-dimethylallyladenosine synthase (467 aa).

An MTTase N-terminal domain is found at 22–138 (GSYWITTFGC…LETLLNKVET (117 aa)). [4Fe-4S] cluster is bound by residues Cys31, Cys67, Cys101, Cys173, Cys177, and Cys180. The Radical SAM core domain maps to 159–396 (RDSSICAWVN…NSLVEIKAKE (238 aa)). The TRAM domain maps to 399 to 467 (VRYKDRVEEV…AFSLSGVIEN (69 aa)).

This sequence belongs to the methylthiotransferase family. MiaB subfamily. In terms of assembly, monomer. Requires [4Fe-4S] cluster as cofactor.

The protein localises to the cytoplasm. It catalyses the reaction N(6)-dimethylallyladenosine(37) in tRNA + (sulfur carrier)-SH + AH2 + 2 S-adenosyl-L-methionine = 2-methylsulfanyl-N(6)-dimethylallyladenosine(37) in tRNA + (sulfur carrier)-H + 5'-deoxyadenosine + L-methionine + A + S-adenosyl-L-homocysteine + 2 H(+). In terms of biological role, catalyzes the methylthiolation of N6-(dimethylallyl)adenosine (i(6)A), leading to the formation of 2-methylthio-N6-(dimethylallyl)adenosine (ms(2)i(6)A) at position 37 in tRNAs that read codons beginning with uridine. The polypeptide is tRNA-2-methylthio-N(6)-dimethylallyladenosine synthase (Prochlorococcus marinus (strain MIT 9211)).